We begin with the raw amino-acid sequence, 147 residues long: NADH-quinone oxidoreductase subunit A (147 aa).

Helical transmembrane passes span 16–36 (FAIFLIVAIGLCCLMLVGGWF), 68–88 (FYLVAMFFVIFDVEALYLFAW), and 97–117 (WVGFVEAAIFIFVLLAGLVYL).

Belongs to the complex I subunit 3 family. As to quaternary structure, NDH-1 is composed of 13 different subunits. Subunits NuoA, H, J, K, L, M, N constitute the membrane sector of the complex.

It localises to the cell inner membrane. The enzyme catalyses a quinone + NADH + 5 H(+)(in) = a quinol + NAD(+) + 4 H(+)(out). NDH-1 shuttles electrons from NADH, via FMN and iron-sulfur (Fe-S) centers, to quinones in the respiratory chain. The immediate electron acceptor for the enzyme in this species is believed to be ubiquinone. Couples the redox reaction to proton translocation (for every two electrons transferred, four hydrogen ions are translocated across the cytoplasmic membrane), and thus conserves the redox energy in a proton gradient. This chain is NADH-quinone oxidoreductase subunit A, found in Salmonella paratyphi A (strain ATCC 9150 / SARB42).